A 2300-amino-acid chain; its full sequence is Adenylate cyclase (2300 aa).

Polar residues-rich tracts occupy residues 1–21 (MTRN…SSIT) and 28–41 (TPTS…TRPL). Disordered stretches follow at residues 1-256 (MTRN…GSFL), 272-593 (GIRP…DLTR), and 631-652 (TKLF…MDED). 2 stretches are compositionally biased toward low complexity: residues 42–61 (SPSL…VSRS) and 92–152 (SSQS…QVSP). Over residues 153–169 (TGGSRLTQSPTTPSNAS) the composition is skewed to polar residues. Basic and acidic residues predominate over residues 170–185 (IREHRMSELGGYRREM). Over residues 204 to 221 (QQQPQQPQQQQQQQQQQQ) the composition is skewed to low complexity. Residues 228 to 237 (VSGTFSNLSQ) are compositionally biased toward polar residues. A compositionally biased stretch (low complexity) spans 303–313 (SIASITTTASS). Residues 333–344 (GDRDDWPGRDSS) show a composition bias toward basic and acidic residues. Over residues 345–357 (EISLPQPSHSGPM) the composition is skewed to polar residues. The segment covering 410 to 421 (PSRPRTPVPAPE) has biased composition (pro residues). Over residues 455-469 (DSSQNPPKTSSSARS) the composition is skewed to polar residues. Positions 484-501 (KSNEDPRALKPSLSREDS) are enriched in basic and acidic residues. The segment covering 511 to 550 (NGSSSMMGTRSRAQSPAPSWTGTSRGLKANSISDGTSSPA) has biased composition (polar residues). Basic residues predominate over residues 552–565 (SHKKGILGRFRRHN). Positions 631–643 (TKLFTSKKSSSAK) are enriched in low complexity. A Ras-associating domain is found at 749–841 (SNYYIRVFRS…IDEIGREDNS (93 aa)). LRR repeat units follow at residues 867 to 890 (NQKL…LYRK), 892 to 914 (AEIV…FIQA), 915 to 938 (CTAL…FATA), 939 to 961 (SKLT…ELSK), 962 to 986 (LTGL…GAYK), 988 to 1008 (LRTL…ICEL), 1009 to 1031 (ETIV…LMKL), 1033 to 1055 (NLEK…VRDL), 1056 to 1079 (VSLR…DLPR), 1081 to 1097 (EILS…SGSF), 1098 to 1119 (ERLR…KAPV), 1120 to 1142 (PTLK…IDNL), 1143 to 1165 (MNLE…IGNL), 1166 to 1188 (KKLD…IGCL), 1189 to 1211 (TELR…IWWA), and 1213 to 1234 (KLEH…ASRA). The disordered stretch occupies residues 1228–1336 (PKPASRAPQA…VITPSNGPRK (109 aa)). Polar residues predominate over residues 1253–1263 (ANKNGLLSRTP). Positions 1313-1327 (TSVVSRSTTQSSTGV) are enriched in low complexity. 6 LRR repeats span residues 1349 to 1369 (SGSL…VFEE), 1373 to 1396 (LPEL…TIRS), 1398 to 1420 (PQLV…DFLE), 1422 to 1445 (HCLL…ISRA), 1447 to 1469 (KLQV…PYDW), and 1474 to 1497 (NRDL…YRQP). A PPM-type phosphatase domain is found at 1552 to 1828 (PYGMADTLGK…NKLLIMMIGV (277 aa)). The interval 1847–1867 (FSMPQDDPSHVPPSGNKRRKV) is disordered. Residues 1892-2029 (SIVFTDIKNS…PMVNKASRIS (138 aa)) enclose the Guanylate cyclase domain. Positions 1897 and 1940 each coordinate Mg(2+). Residues 2272-2300 (LDQAETDDATDNNSSGDVDTLDGSDTEQE) are disordered. The span at 2290 to 2300 (DTLDGSDTEQE) shows a compositional bias: acidic residues.

The protein belongs to the adenylyl cyclase class-4/guanylyl cyclase family. Requires Mg(2+) as cofactor.

The enzyme catalyses ATP = 3',5'-cyclic AMP + diphosphate. In terms of biological role, plays essential roles in regulation of cellular metabolism by catalyzing the synthesis of a second messenger, cAMP. This is Adenylate cyclase (cr-1) from Neurospora crassa (strain ATCC 24698 / 74-OR23-1A / CBS 708.71 / DSM 1257 / FGSC 987).